The primary structure comprises 160 residues: MATQKKPDLSDPQLRAKLAKGMGHNYYGEPAWPNDLLYVFPIVIMGSFAAIVALAVLDPAMTGEPANPFATPLEILPEWYLYPVFQILRSLPNKLLGVLAMASVPLGLILVPFIENVNKFQNPFRRPVATTVFLFGTLVTLWLGIGAALPLDKSLTLGLF.

The next 3 helical transmembrane spans lie at 36–56 (LLYVFPIVIMGSFAAIVALAV), 95–115 (LLGVLAMASVPLGLILVPFIE), and 131–151 (TVFLFGTLVTLWLGIGAALPL).

The protein belongs to the cytochrome b family. PetD subfamily. In terms of assembly, the 4 large subunits of the cytochrome b6-f complex are cytochrome b6, subunit IV (17 kDa polypeptide, PetD), cytochrome f and the Rieske protein, while the 4 small subunits are PetG, PetL, PetM and PetN. The complex functions as a dimer.

Its subcellular location is the cellular thylakoid membrane. Component of the cytochrome b6-f complex, which mediates electron transfer between photosystem II (PSII) and photosystem I (PSI), cyclic electron flow around PSI, and state transitions. The protein is Cytochrome b6-f complex subunit 4 of Desmonostoc sp. (strain PCC 7906) (Nostoc sp. (strain PCC 7906)).